The sequence spans 57 residues: Large ribosomal subunit protein bL32c (57 aa).

Belongs to the bacterial ribosomal protein bL32 family.

It is found in the plastid. It localises to the chloroplast. In Nandina domestica (Heavenly bamboo), this protein is Large ribosomal subunit protein bL32c.